The primary structure comprises 450 residues: Cell division cycle 20.5, cofactor of APC complex (450 aa).

7 WD repeats span residues 129 to 166, 171 to 210, 214 to 251, 255 to 294, 304 to 346, 348 to 389, and 392 to 431; these read ADDF…TYKL, EEEG…QVRT, GHES…SIVE, GHTE…SSNP, EHTA…CLNS, ETGS…KMAE, and GHTS…PKTT.

Belongs to the WD repeat CDC20/Fizzy family. In terms of assembly, the APC/C is composed of at least 11 subunits that stay tightly associated throughout the cell cycle. Binds to GIG1 and PYM. Part of the mitotic checkpoint complex (MCC); interacts with MAD2 and BUB1.

The protein localises to the nucleus. It functions in the pathway protein modification; protein ubiquitination. Functionally, component of the anaphase promoting complex/cyclosome (APC/C), a cell cycle-regulated E3 ubiquitin-protein ligase complex that controls progression through mitosis and the G1 phase of the cell cycle. The protein is Cell division cycle 20.5, cofactor of APC complex (CDC20-5) of Arabidopsis thaliana (Mouse-ear cress).